The primary structure comprises 76 residues: Small ribosomal subunit protein bS16 (76 aa).

It belongs to the bacterial ribosomal protein bS16 family.

The protein is Small ribosomal subunit protein bS16 of Helicobacter pylori (strain HPAG1).